Consider the following 90-residue polypeptide: Probable Fe(2+)-trafficking protein (90 aa).

This sequence belongs to the Fe(2+)-trafficking protein family.

Functionally, could be a mediator in iron transactions between iron acquisition and iron-requiring processes, such as synthesis and/or repair of Fe-S clusters in biosynthetic enzymes. This is Probable Fe(2+)-trafficking protein from Chromobacterium violaceum (strain ATCC 12472 / DSM 30191 / JCM 1249 / CCUG 213 / NBRC 12614 / NCIMB 9131 / NCTC 9757 / MK).